Here is a 301-residue protein sequence, read N- to C-terminus: Hydroxymethylglutaryl-CoA lyase (301 aa).

The 268-residue stretch at 4 to 271 (VKVFEVGPRD…STGVDLEAVA (268 aa)) folds into the Pyruvate carboxyltransferase domain. R12 is a substrate binding site. Residues D13, H204, and H206 each contribute to the a divalent metal cation site. Residue C237 is part of the active site. N246 serves as a coordination point for a divalent metal cation.

It belongs to the HMG-CoA lyase family.

The catalysed reaction is (3S)-3-hydroxy-3-methylglutaryl-CoA = acetoacetate + acetyl-CoA. It functions in the pathway metabolic intermediate metabolism; (S)-3-hydroxy-3-methylglutaryl-CoA degradation; acetoacetate from (S)-3-hydroxy-3-methylglutaryl-CoA: step 1/1. In terms of biological role, involved in the catabolism of branched amino acids such as leucine. The protein is Hydroxymethylglutaryl-CoA lyase (mvaB) of Pseudomonas mevalonii.